Reading from the N-terminus, the 1297-residue chain is Probable bifunctional E2/E3 enzyme R795 (1297 aa).

The RING-type; atypical zinc finger occupies 74–128 (CAICRYQENEPCIEHKSSESNTKCPIAQSVSCSHSFHACCISRWLHTKKTCPLCN). The region spanning 678–750 (EPLQEFLCPI…RDWKENNTVI (73 aa)) is the U-box domain. The 184-residue stretch at 899-1082 (EMTLEIHSSN…LDIMELETMI (184 aa)) folds into the VWFA domain. Residues 1133–1279 (QKLIRVQREI…IIDYVNKFAL (147 aa)) enclose the UBC core domain. Residue cysteine 1217 is the Glycyl thioester intermediate of the active site.

The protein in the C-terminal section; belongs to the ubiquitin-conjugating enzyme family.

The catalysed reaction is S-ubiquitinyl-[E2 ubiquitin-conjugating enzyme]-L-cysteine + [acceptor protein]-L-lysine = [E2 ubiquitin-conjugating enzyme]-L-cysteine + N(6)-ubiquitinyl-[acceptor protein]-L-lysine.. It carries out the reaction S-ubiquitinyl-[E1 ubiquitin-activating enzyme]-L-cysteine + [E2 ubiquitin-conjugating enzyme]-L-cysteine = [E1 ubiquitin-activating enzyme]-L-cysteine + S-ubiquitinyl-[E2 ubiquitin-conjugating enzyme]-L-cysteine.. It participates in protein modification; protein ubiquitination. In terms of biological role, catalyzes the covalent attachment of ubiquitin to other proteins. Also acts as an E3 ubiquitin-protein ligase. The chain is Probable bifunctional E2/E3 enzyme R795 from Acanthamoeba polyphaga (Amoeba).